The primary structure comprises 220 residues: Claudin-6 (220 aa).

Residues M1 to Q7 are Cytoplasmic-facing. Residues I8–P28 form a helical membrane-spanning segment. Residues M29 to R81 are Extracellular-facing. A helical membrane pass occupies residues A82–A102. Over K103–R116 the chain is Cytoplasmic. The helical transmembrane segment at L117 to C137 threads the bilayer. Residues W138–L160 lie on the Extracellular side of the membrane. Residues G161–L181 traverse the membrane as a helical segment. Topologically, residues C182–V220 are cytoplasmic. Residues S201, S203, S208, and S212 each carry the phosphoserine modification. Positions Y219–V220 are interactions with TJP1, TJP2 and TJP3.

It belongs to the claudin family. As to quaternary structure, directly interacts with TJP1/ZO-1, TJP2/ZO-2 and TJP3/ZO-3. Interacts with CLDN1, CD81 and OCLN. In terms of tissue distribution, expressed in the liver, in peripheral blood mononuclear cells and hepatocarcinoma cell lines.

The protein resides in the cell junction. It is found in the tight junction. Its subcellular location is the cell membrane. Its function is as follows. Plays a major role in tight junction-specific obliteration of the intercellular space. (Microbial infection) Acts as a receptor for hepatitis C virus (HCV) entry into hepatic cells. This chain is Claudin-6 (CLDN6), found in Homo sapiens (Human).